The chain runs to 385 residues: 8-amino-7-oxononanoate synthase (385 aa).

Position 21 (Arg21) interacts with substrate. 108 to 109 (GF) serves as a coordination point for pyridoxal 5'-phosphate. His133 is a binding site for substrate. Pyridoxal 5'-phosphate-binding residues include Ser179, His207, and Thr233. Residue Lys236 is modified to N6-(pyridoxal phosphate)lysine. Thr352 provides a ligand contact to substrate.

This sequence belongs to the class-II pyridoxal-phosphate-dependent aminotransferase family. BioF subfamily. In terms of assembly, homodimer. The cofactor is pyridoxal 5'-phosphate.

It carries out the reaction 6-carboxyhexanoyl-[ACP] + L-alanine + H(+) = (8S)-8-amino-7-oxononanoate + holo-[ACP] + CO2. The protein operates within cofactor biosynthesis; biotin biosynthesis. Functionally, catalyzes the decarboxylative condensation of pimeloyl-[acyl-carrier protein] and L-alanine to produce 8-amino-7-oxononanoate (AON), [acyl-carrier protein], and carbon dioxide. The chain is 8-amino-7-oxononanoate synthase from Salmonella paratyphi C (strain RKS4594).